The primary structure comprises 379 residues: Succinyl-diaminopimelate desuccinylase (379 aa).

A Zn(2+)-binding site is contributed by H68. Residue D70 is part of the active site. D101 serves as a coordination point for Zn(2+). Residue E135 is the Proton acceptor of the active site. Positions 136, 164, and 350 each coordinate Zn(2+).

The protein belongs to the peptidase M20A family. DapE subfamily. Homodimer. Requires Zn(2+) as cofactor. It depends on Co(2+) as a cofactor.

The enzyme catalyses N-succinyl-(2S,6S)-2,6-diaminopimelate + H2O = (2S,6S)-2,6-diaminopimelate + succinate. Its pathway is amino-acid biosynthesis; L-lysine biosynthesis via DAP pathway; LL-2,6-diaminopimelate from (S)-tetrahydrodipicolinate (succinylase route): step 3/3. Functionally, catalyzes the hydrolysis of N-succinyl-L,L-diaminopimelic acid (SDAP), forming succinate and LL-2,6-diaminopimelate (DAP), an intermediate involved in the bacterial biosynthesis of lysine and meso-diaminopimelic acid, an essential component of bacterial cell walls. In Bordetella bronchiseptica (strain ATCC BAA-588 / NCTC 13252 / RB50) (Alcaligenes bronchisepticus), this protein is Succinyl-diaminopimelate desuccinylase.